Reading from the N-terminus, the 178-residue chain is Probable DNA-directed RNA polymerase subunit delta (178 aa).

An HTH HARE-type domain is found at 14-81; sequence LSMIEVAHAI…GENTWGLRTW (68 aa). The span at 120-143 shows a compositional bias: acidic residues; that stretch reads DDDVIDYDSDDPEDEEVEAEDTTS. Positions 120–178 are disordered; that stretch reads DDDVIDYDSDDPEDEEVEAEDTTSDDAPAFEDLSNDDDTDVLPDGIEGQLSELNEDDEN.

The protein belongs to the RpoE family. As to quaternary structure, RNAP is composed of a core of 2 alpha, a beta and a beta' subunits. The core is associated with a delta subunit and one of several sigma factors.

In terms of biological role, participates in both the initiation and recycling phases of transcription. In the presence of the delta subunit, RNAP displays an increased specificity of transcription, a decreased affinity for nucleic acids, and an increased efficiency of RNA synthesis because of enhanced recycling. This Pediococcus pentosaceus (strain ATCC 25745 / CCUG 21536 / LMG 10740 / 183-1w) protein is Probable DNA-directed RNA polymerase subunit delta.